The chain runs to 279 residues: Glutamate racemase (279 aa).

Substrate-binding positions include 13 to 14 (DS) and 45 to 46 (YG). Catalysis depends on cysteine 76, which acts as the Proton donor/acceptor. 77-78 (NT) serves as a coordination point for substrate. Cysteine 185 serves as the catalytic Proton donor/acceptor. A substrate-binding site is contributed by 186-187 (TH).

Belongs to the aspartate/glutamate racemases family.

It catalyses the reaction L-glutamate = D-glutamate. It participates in cell wall biogenesis; peptidoglycan biosynthesis. In terms of biological role, provides the (R)-glutamate required for cell wall biosynthesis. The polypeptide is Glutamate racemase (Synechocystis sp. (strain ATCC 27184 / PCC 6803 / Kazusa)).